Here is a 360-residue protein sequence, read N- to C-terminus: Homeobox-leucine zipper protein HOX21 (360 aa).

Disordered stretches follow at residues 25-75 (QQAA…SSAQ) and 88-126 (MLGKRPMSYGDGGGGGDEVNGGGEDELSDDGSQAGEKKR). The segment covering 36-55 (HHHHHHHGHHHEQQQHHHHL) has biased composition (basic residues). Residues 56-68 (GPPPPPPPHPHNP) are compositionally biased toward pro residues. Residues 97-109 (GDGGGGGDEVNGG) are compositionally biased toward gly residues. The homeobox DNA-binding region spans 121–180 (AGEKKRRLNVEQVRTLEKNFELGNKLEPERKMQLARALGLQPRQVAIWFQNRRARWKTKQ). Residues 179–223 (KQLEKDYDALKRQLDAVKAENDALLNHNKKLQAEIVALKGREAAS) form a leucine-zipper region. Disordered stretches follow at residues 233–278 (EASC…GGGG) and 299–328 (GVDIDQLLHSSSGGAGGPKMEHHGGGGNVQ). Positions 234-246 (ASCSNRSENSSEI) are enriched in polar residues.

It belongs to the HD-ZIP homeobox family. Class I subfamily. Expressed in seedlings, roots, stems, leaf blades and panicles.

The protein resides in the nucleus. Probable transcription factor. The polypeptide is Homeobox-leucine zipper protein HOX21 (HOX21) (Oryza sativa subsp. indica (Rice)).